The following is a 304-amino-acid chain: UDP-3-O-acyl-N-acetylglucosamine deacetylase (304 aa).

His78, His235, and Asp239 together coordinate Zn(2+). The active-site Proton donor is His262.

Belongs to the LpxC family. Zn(2+) serves as cofactor.

The enzyme catalyses a UDP-3-O-[(3R)-3-hydroxyacyl]-N-acetyl-alpha-D-glucosamine + H2O = a UDP-3-O-[(3R)-3-hydroxyacyl]-alpha-D-glucosamine + acetate. It functions in the pathway glycolipid biosynthesis; lipid IV(A) biosynthesis; lipid IV(A) from (3R)-3-hydroxytetradecanoyl-[acyl-carrier-protein] and UDP-N-acetyl-alpha-D-glucosamine: step 2/6. In terms of biological role, catalyzes the hydrolysis of UDP-3-O-myristoyl-N-acetylglucosamine to form UDP-3-O-myristoylglucosamine and acetate, the committed step in lipid A biosynthesis. The protein is UDP-3-O-acyl-N-acetylglucosamine deacetylase of Anaeromyxobacter sp. (strain Fw109-5).